Here is a 345-residue protein sequence, read N- to C-terminus: Holliday junction branch migration complex subunit RuvB (345 aa).

The tract at residues 4-185 (LDNRFVTPLS…FGVLCPMEFY (182 aa)) is large ATPase domain (RuvB-L). ATP contacts are provided by residues L24, R25, G66, K69, T70, T71, 132–134 (EDY), R175, Y185, and R222. Residue T70 coordinates Mg(2+). Residues 186 to 256 (NEEELKDIIV…MTNKALNLLE (71 aa)) form a small ATPAse domain (RuvB-S) region. The segment at 259–345 (KEGFDSIDTK…ENINQYKFKI (87 aa)) is head domain (RuvB-H). Positions 314 and 319 each coordinate DNA.

It belongs to the RuvB family. As to quaternary structure, homohexamer. Forms an RuvA(8)-RuvB(12)-Holliday junction (HJ) complex. HJ DNA is sandwiched between 2 RuvA tetramers; dsDNA enters through RuvA and exits via RuvB. An RuvB hexamer assembles on each DNA strand where it exits the tetramer. Each RuvB hexamer is contacted by two RuvA subunits (via domain III) on 2 adjacent RuvB subunits; this complex drives branch migration. In the full resolvosome a probable DNA-RuvA(4)-RuvB(12)-RuvC(2) complex forms which resolves the HJ.

It localises to the cytoplasm. The catalysed reaction is ATP + H2O = ADP + phosphate + H(+). Functionally, the RuvA-RuvB-RuvC complex processes Holliday junction (HJ) DNA during genetic recombination and DNA repair, while the RuvA-RuvB complex plays an important role in the rescue of blocked DNA replication forks via replication fork reversal (RFR). RuvA specifically binds to HJ cruciform DNA, conferring on it an open structure. The RuvB hexamer acts as an ATP-dependent pump, pulling dsDNA into and through the RuvAB complex. RuvB forms 2 homohexamers on either side of HJ DNA bound by 1 or 2 RuvA tetramers; 4 subunits per hexamer contact DNA at a time. Coordinated motions by a converter formed by DNA-disengaged RuvB subunits stimulates ATP hydrolysis and nucleotide exchange. Immobilization of the converter enables RuvB to convert the ATP-contained energy into a lever motion, pulling 2 nucleotides of DNA out of the RuvA tetramer per ATP hydrolyzed, thus driving DNA branch migration. The RuvB motors rotate together with the DNA substrate, which together with the progressing nucleotide cycle form the mechanistic basis for DNA recombination by continuous HJ branch migration. Branch migration allows RuvC to scan DNA until it finds its consensus sequence, where it cleaves and resolves cruciform DNA. In Clostridium tetani (strain Massachusetts / E88), this protein is Holliday junction branch migration complex subunit RuvB.